A 546-amino-acid chain; its full sequence is Chaperonin GroEL (546 aa).

ATP contacts are provided by residues 30–33 (TLGP), Lys51, 87–91 (DGTTT), Gly415, 479–481 (NAA), and Asp495. Positions 525–546 (PEPKKDMPPMPGGGMGGMGGMY) are disordered. The segment covering 536-546 (GGGMGGMGGMY) has biased composition (gly residues).

This sequence belongs to the chaperonin (HSP60) family. As to quaternary structure, forms a cylinder of 14 subunits composed of two heptameric rings stacked back-to-back. Interacts with the co-chaperonin GroES.

Its subcellular location is the cytoplasm. It carries out the reaction ATP + H2O + a folded polypeptide = ADP + phosphate + an unfolded polypeptide.. In terms of biological role, together with its co-chaperonin GroES, plays an essential role in assisting protein folding. The GroEL-GroES system forms a nano-cage that allows encapsulation of the non-native substrate proteins and provides a physical environment optimized to promote and accelerate protein folding. In Solidesulfovibrio magneticus (strain ATCC 700980 / DSM 13731 / RS-1) (Desulfovibrio magneticus), this protein is Chaperonin GroEL.